A 77-amino-acid chain; its full sequence is Acyl carrier protein (77 aa).

The Carrier domain occupies 1 to 76; that stretch reads MSLEDDVKAI…DVIKYIQEHQ (76 aa). The residue at position 36 (Ser36) is an O-(pantetheine 4'-phosphoryl)serine.

This sequence belongs to the acyl carrier protein (ACP) family. In terms of processing, 4'-phosphopantetheine is transferred from CoA to a specific serine of apo-ACP by AcpS. This modification is essential for activity because fatty acids are bound in thioester linkage to the sulfhydryl of the prosthetic group.

The protein localises to the cytoplasm. It participates in lipid metabolism; fatty acid biosynthesis. Functionally, carrier of the growing fatty acid chain in fatty acid biosynthesis. The polypeptide is Acyl carrier protein (Chlamydia trachomatis serovar L2 (strain ATCC VR-902B / DSM 19102 / 434/Bu)).